The following is a 1661-amino-acid chain: ATP-dependent bile acid permease (1661 aa).

Topologically, residues 1–33 (MHHVLNSTRPDHRFWFYDDVTQYGRTKYLNYYT) are lumenal. Asn6 carries an N-linked (GlcNAc...) asparagine glycan. A helical transmembrane segment spans residues 34 to 54 (PLVLLIFTVLFITYNIWKHYY). Residues 55–74 (YYDVLHLKQKNPIDELLYSS) are Cytoplasmic-facing. The helical transmembrane segment at 75–95 (TDEDEQSPLINNNTITTNYVD) threads the bilayer. At 96–133 (NNCTKDALKNRHFSLEKLKSVKVNGEPHGTPEIVRRGF) the chain is on the lumenal side. An N-linked (GlcNAc...) asparagine glycan is attached at Asn97. The chain crosses the membrane as a helical span at residues 134-154 (IEKSRIILEFFLVLSQVIIHS). Residues 155 to 166 (FILLHYVNKNPE) lie on the Cytoplasmic side of the membrane. A helical membrane pass occupies residues 167–187 (FTQQGTITGLVEWCALFIIVS). The Lumenal segment spans residues 188–205 (LRLANVNQNFKFINKYPG). The helical transmembrane segment at 206–226 (NLWSVSFINYLALFISMILPF) threads the bilayer. The Cytoplasmic segment spans residues 227–345 (RSIFIHHINS…VKRKRIFSLN (119 aa)). Residues 346 to 366 (LFFFFSNYLVLQCFWAFLGSV) form a helical membrane-spanning segment. An ABC transmembrane type-1 1 domain is found at 354 to 662 (LVLQCFWAFL…LSDMLSFVVQ (309 aa)). Residues 367 to 393 (LSFIPTVLLKRILEYVEDQSSAPSNLA) are Lumenal-facing. Residues 394–414 (WFYVTVMFVGRILVAICQAQA) form a helical membrane-spanning segment. The Cytoplasmic segment spans residues 415–495 (LFFGRRVCIR…AFKVSEICGY (81 aa)). Residues 445–468 (NKTKPSNEDPQEINDQKSINGDEE) are disordered. Residues 496–516 (LHSFLEAFVMTVVALALLYRL) traverse the membrane as a helical segment. Over 517–519 (LGF) the chain is Lumenal. Residues 520-540 (AAIVGVLIIVAMLPLNYKLAK) traverse the membrane as a helical segment. At 541 to 602 (YIGDLQKKNL…LLLMRSIVWS (62 aa)) the chain is on the cytoplasmic side. The helical transmembrane segment at 603 to 623 (ISSFLWFVTPTIVTAASFAYY) threads the bilayer. The Lumenal segment spans residues 624–644 (IYVQGEVLTTPVAFTALSLFT). Residues 645–665 (LLRDPLDRLSDMLSFVVQSKV) traverse the membrane as a helical segment. Topologically, residues 666–1053 (SLDRVQDFLN…SWWVRAWASH (388 aa)) are cytoplasmic. One can recognise an ABC transporter 1 domain in the interval 694–935 (FAFENSTISW…GLFGEDELVK (242 aa)). 729 to 736 (GPTGSGKT) contacts ATP. Phosphoserine is present on residues Ser936, Ser940, and Ser955. An ABC transmembrane type-1 2 domain is found at 1026–1345 (VSFLASLFLI…LVRLYSEVEM (320 aa)). The chain crosses the membrane as a helical span at residues 1054–1074 (NVIAKIIPRAQRAIAFISKKA). Over 1075-1114 (SHLIDWRGSSQISMASAENQPSSGHSTMYYLVLYLIIGFA) the chain is Lumenal. Residues 1115 to 1135 (QALLGAGKTILNFVAGINASR) form a helical membrane-spanning segment. Residues 1136-1178 (KIFNMILNKVLHSKIRFFDATPTGRIMNRFSKDIEAIDQELTP) lie on the Cytoplasmic side of the membrane. Residues 1179–1199 (YIQGAFYSLIECLSTVILITF) traverse the membrane as a helical segment. Position 1200 (Ile1200) is a topological domain, lumenal. Residues 1201–1221 (TPQFLSVAIVVSILYYFVGYF) form a helical membrane-spanning segment. At 1222–1292 (YMAGSRELKR…VANRWLAFRI (71 aa)) the chain is on the cytoplasmic side. A helical transmembrane segment spans residues 1293-1313 (DMIGSLVIFGAGLFILFNINN). Residues 1314–1315 (LD) lie on the Lumenal side of the membrane. The helical transmembrane segment at 1316-1336 (SGMAGISLTYAISFTEGALWL) threads the bilayer. Residues 1337–1661 (VRLYSEVEMN…FVEKLNSKKD (325 aa)) are Cytoplasmic-facing. An ABC transporter 2 domain is found at 1381–1636 (IEVNDLSLRY…KQSAFYSMCE (256 aa)). 1415–1422 (GRTGAGKS) lines the ATP pocket.

The protein belongs to the ABC transporter superfamily. ABCC family. Conjugate transporter (TC 3.A.1.208) subfamily.

The protein localises to the vacuole membrane. In terms of biological role, vacuolar class C ABC transporter which regulates the translocation of phosphatidylcholine to the vacuole lumen, the release of lumenal calcium stores, and acts as a negative regulator of vacuole fusion. Exhibits ATP-dependent bile acid transport. This Saccharomyces cerevisiae (strain ATCC 204508 / S288c) (Baker's yeast) protein is ATP-dependent bile acid permease (YBT1).